Here is a 35-residue protein sequence, read N- to C-terminus: Photosystem II reaction center protein T (35 aa).

The helical transmembrane segment at alanine 3 to phenylalanine 23 threads the bilayer.

It belongs to the PsbT family. PSII is composed of 1 copy each of membrane proteins PsbA, PsbB, PsbC, PsbD, PsbE, PsbF, PsbH, PsbI, PsbJ, PsbK, PsbL, PsbM, PsbT, PsbY, PsbZ, Psb30/Ycf12, at least 3 peripheral proteins of the oxygen-evolving complex and a large number of cofactors. It forms dimeric complexes.

It is found in the plastid. The protein resides in the chloroplast thylakoid membrane. Found at the monomer-monomer interface of the photosystem II (PS II) dimer, plays a role in assembly and dimerization of PSII. PSII is a light-driven water plastoquinone oxidoreductase, using light energy to abstract electrons from H(2)O, generating a proton gradient subsequently used for ATP formation. In Bassia hyssopifolia (Fivehorn smotherweed), this protein is Photosystem II reaction center protein T.